The chain runs to 1939 residues: Myosin-1 (1939 aa).

The 50-residue stretch at 33–82 folds into the Myosin N-terminal SH3-like domain; that stretch reads DAKTSVFVAEPKESFVKGTVQSREGGKVTVKTEAGATLTVKEDQVFPMNP. Threonine 64 and threonine 69 each carry phosphothreonine. Residues 86–782 enclose the Myosin motor domain; the sequence is DKIEDMAMMT…LLGLLEEMRD (697 aa). An N6,N6,N6-trimethyllysine modification is found at lysine 130. 179 to 186 is an ATP binding site; the sequence is GESGAGKT. Position 389 is a phosphotyrosine (tyrosine 389). Residue serine 392 is modified to Phosphoserine. Threonine 419 carries the phosphothreonine modification. A Phosphotyrosine modification is found at tyrosine 424. Serine 625 is modified (phosphoserine). The actin-binding stretch occupies residues 659–681; sequence LNKLMTNLRSTHPHFVRCIIPNE. At histidine 757 the chain carries Pros-methylhistidine. The interval 761–775 is actin-binding; it reads KFGHTKVFFKAGLLG. The region spanning 785 to 814 is the IQ domain; it reads LAQLITRTQARCRGFLARVEYQKMVERRES. Residues 843–1939 are a coiled coil; the sequence is LLKSAETEKE…EVHTKIISEE (1097 aa). Phosphoserine is present on residues serine 1092 and serine 1096. 2 disordered regions span residues 1125-1147 and 1153-1172; these read EIEAERASRAKAEKQRSDLSREL and RLEEAGGATSAQIEMNKKRE. The segment covering 1128–1147 has biased composition (basic and acidic residues); sequence AERASRAKAEKQRSDLSREL. Residues serine 1162 and serine 1237 each carry the phosphoserine modification. Threonine 1241 bears the Phosphothreonine mark. Serine 1243 carries the phosphoserine modification. Residue threonine 1255 is modified to Phosphothreonine. Serine 1261 is subject to Phosphoserine. Residues threonine 1265 and threonine 1286 each carry the phosphothreonine modification. Residues serine 1288, serine 1292, serine 1303, and serine 1306 each carry the phosphoserine modification. The residue at position 1464 (tyrosine 1464) is a Phosphotyrosine. A Phosphothreonine modification is found at threonine 1467. Serine 1474 is subject to Phosphoserine. Residue tyrosine 1492 is modified to Phosphotyrosine. Residue serine 1495 is modified to Phosphoserine. Threonine 1501 is modified (phosphothreonine). At serine 1514 the chain carries Phosphoserine. At threonine 1517 the chain carries Phosphothreonine. Residues serine 1554, serine 1574, serine 1600, serine 1603, serine 1714, and serine 1726 each carry the phosphoserine modification. 2 positions are modified to phosphothreonine: threonine 1730 and threonine 1736. Position 1739 is a phosphoserine (serine 1739).

This sequence belongs to the TRAFAC class myosin-kinesin ATPase superfamily. Myosin family. Muscle myosin is a hexameric protein that consists of 2 heavy chain subunits (MHC), 2 alkali light chain subunits (MLC) and 2 regulatory light chain subunits (MLC-2). Interacts with SLC26A5.

It localises to the cytoplasm. It is found in the myofibril. Required for normal hearing. It plays a role in cochlear amplification of auditory stimuli, likely through the positive regulation of prestin (SLC26A5) activity and outer hair cell (OHC) electromotility. This Canis lupus familiaris (Dog) protein is Myosin-1 (MYH1).